The primary structure comprises 913 residues: Trafficking kinesin-binding protein 2 (913 aa).

A compositionally biased stretch (polar residues) spans 11 to 21 (SQTGEENLMSS). A disordered region spans residues 11–31 (SQTGEENLMSSNHRDSESITD). Positions 48–353 (EEQLPQYKLR…QEEIKELRNK (306 aa)) constitute an HAP1 N-terminal domain. Residues 134-355 (QALLKRNHVL…EIKELRNKAG (222 aa)) are a coiled coil. An interaction with HGS region spans residues 359–507 (HLCFSQAYGV…KQFFAEEWER (149 aa)). The segment at 442–478 (ESGVQQTEDKTLPNQGSSTEVPGNSHPRDPPGLPEDS) is disordered. A compositionally biased stretch (polar residues) spans 453 to 463 (LPNQGSSTEVP). Positions 502-519 (AEEWERKLQILAEQEEEV) form a coiled coil. Low complexity-rich tracts occupy residues 688–704 (SSGFPSLSCGSSAGSAS) and 780–789 (PSQSPCSSPV). Disordered stretches follow at residues 688 to 707 (SSGFPSLSCGSSAGSASNTA) and 769 to 790 (ALATPSTPPNSPSQSPCSSPVP).

It belongs to the milton family. As to quaternary structure, interacts with RHOT1/Miro-1 and RHOT2/Miro-2. Interacts with GABA-A receptor and O-GlcNAc transferase. Interacts with HGS. O-glycosylated. As to expression, present in heart and brain (at protein level).

The protein localises to the cytoplasm. It is found in the early endosome. Its subcellular location is the mitochondrion. May regulate endosome-to-lysosome trafficking of membrane cargo, including EGFR. The polypeptide is Trafficking kinesin-binding protein 2 (Trak2) (Rattus norvegicus (Rat)).